The primary structure comprises 541 residues: Chaperonin GroEL 2 (541 aa).

Residues 29–32, 86–90, Gly-413, 476–478, and Asp-492 each bind ATP; these read TLGP, DGTTT, and NAA.

It belongs to the chaperonin (HSP60) family. In terms of assembly, forms a cylinder of 14 subunits composed of two heptameric rings stacked back-to-back. Interacts with the co-chaperonin GroES.

It is found in the secreted. The protein localises to the capsule. The protein resides in the cell surface. Its subcellular location is the cell wall. The catalysed reaction is ATP + H2O + a folded polypeptide = ADP + phosphate + an unfolded polypeptide.. In terms of biological role, together with its co-chaperonin GroES, plays an essential role in assisting protein folding. The GroEL-GroES system forms a nano-cage that allows encapsulation of the non-native substrate proteins and provides a physical environment optimized to promote and accelerate protein folding. The chain is Chaperonin GroEL 2 from Mycolicibacterium gilvum (strain PYR-GCK) (Mycobacterium gilvum (strain PYR-GCK)).